The following is a 476-amino-acid chain: Cysteine--tRNA ligase (476 aa).

Residue C29 coordinates Zn(2+). The 'HIGH' region motif lies at P31 to H41. Zn(2+) contacts are provided by C209, H234, and E238. A 'KMSKS' region motif is present at residues K266 to S270. An ATP-binding site is contributed by K269.

The protein belongs to the class-I aminoacyl-tRNA synthetase family. Zn(2+) is required as a cofactor.

The protein resides in the cytoplasm. The enzyme catalyses tRNA(Cys) + L-cysteine + ATP = L-cysteinyl-tRNA(Cys) + AMP + diphosphate. In Pyrococcus horikoshii (strain ATCC 700860 / DSM 12428 / JCM 9974 / NBRC 100139 / OT-3), this protein is Cysteine--tRNA ligase (cysS).